Consider the following 1008-residue polypeptide: Collagen, type I, alpha 1a (1008 aa).

Over residues 1 to 21 (SPAMPVPGPMGPMGPRGPPGS) the composition is skewed to pro residues. Positions 1–920 (SPAMPVPGPM…PQEKAPDPFR (920 aa)) are disordered. Residues 39–53 (NGEDGESGKPGRGGE) are compositionally biased toward basic and acidic residues. The segment covering 92 to 117 (TPGAMGPRGAAGAAGARGNDGAAGAA) has biased composition (low complexity). Residues 119-132 (PPGPTGPAGPPGFP) are compositionally biased toward pro residues. Positions 133–151 (GGPGAKGDAGAQGGRGPEG) are enriched in gly residues. 2 stretches are compositionally biased toward low complexity: residues 152–195 (PAGA…AGAP) and 204–230 (SGPQ…APGV). A compositionally biased stretch (gly residues) spans 253–265 (GARGGPGGRGFPG). Low complexity-rich tracts occupy residues 339-354 (VGAR…PGPK) and 410-422 (LPGE…PAGA). Residues 423 to 435 (RGDRGFPGERGAK) show a composition bias toward basic and acidic residues. Low complexity-rich tracts occupy residues 437 to 456 (DAGA…QGMP), 489 to 524 (RGLT…ARGA), and 537 to 573 (AGFA…AGPT). The segment covering 604–617 (PPGPSGNPGPPGPA) has biased composition (pro residues). The span at 634–661 (PAGRPGELGAAGPPGPAGEKGSPGSEGA) shows a compositional bias: low complexity. Gly residues predominate over residues 696–709 (GEAGGPSGPGGERG). Positions 717–735 (PGLAGAPGEPGREGSPGNE) are enriched in low complexity. Over residues 761–771 (APGPPGAPGPV) the composition is skewed to pro residues. Over residues 785–806 (PAGPAGSAGPSGPRGPAGAPGL) the composition is skewed to low complexity. Over residues 807 to 821 (RGDKGESGEAGERRG) the composition is skewed to basic and acidic residues. Residues 832–868 (SGSSGEQGPAGAAGPAGPRGPAGSAGSPGKDGMSGLP) show a composition bias toward low complexity. Pro residues predominate over residues 884–896 (AGPPGPPGPPGAP). The region spanning 978–1008 (TSRLPLLDLAPMDVGAPDQEFGLEVGPVCFL) is the Fibrillar collagen NC1 domain.

The protein belongs to the fibrillar collagen family.

The protein resides in the secreted. It is found in the extracellular space. Its subcellular location is the extracellular matrix. In Epinephelus aeneus (White grouper), this protein is Collagen, type I, alpha 1a.